Reading from the N-terminus, the 247-residue chain is tRNA (guanine-N(1)-)-methyltransferase (247 aa).

Residues Gly-115 and 134-139 contribute to the S-adenosyl-L-methionine site; that span reads IGDFVL.

It belongs to the RNA methyltransferase TrmD family. Homodimer.

It is found in the cytoplasm. It catalyses the reaction guanosine(37) in tRNA + S-adenosyl-L-methionine = N(1)-methylguanosine(37) in tRNA + S-adenosyl-L-homocysteine + H(+). Specifically methylates guanosine-37 in various tRNAs. This Anaeromyxobacter dehalogenans (strain 2CP-C) protein is tRNA (guanine-N(1)-)-methyltransferase.